A 283-amino-acid polypeptide reads, in one-letter code: 4-diphosphocytidyl-2-C-methyl-D-erythritol kinase (283 aa).

Lys-10 is an active-site residue. Position 99 to 109 (99 to 109) interacts with ATP; that stretch reads PMGGGLGGGSS. Residue Asp-141 is part of the active site.

It belongs to the GHMP kinase family. IspE subfamily. Homodimer.

It carries out the reaction 4-CDP-2-C-methyl-D-erythritol + ATP = 4-CDP-2-C-methyl-D-erythritol 2-phosphate + ADP + H(+). It participates in isoprenoid biosynthesis; isopentenyl diphosphate biosynthesis via DXP pathway; isopentenyl diphosphate from 1-deoxy-D-xylulose 5-phosphate: step 3/6. Catalyzes the phosphorylation of the position 2 hydroxy group of 4-diphosphocytidyl-2C-methyl-D-erythritol. The protein is 4-diphosphocytidyl-2-C-methyl-D-erythritol kinase of Escherichia coli O9:H4 (strain HS).